A 120-amino-acid polypeptide reads, in one-letter code: Basic phospholipase A2 homolog piratoxin-3 (120 aa).

Cystine bridges form between Cys26–Cys113, Cys28–Cys44, Cys43–Cys94, Cys49–Cys120, Cys50–Cys87, Cys57–Cys81, and Cys75–Cys85. The important for membrane-damaging activities in eukaryotes and bacteria; heparin-binding stretch occupies residues 104–115 (KKYRYHLKPCKK).

This sequence belongs to the phospholipase A2 family. Group II subfamily. D49 sub-subfamily. Homodimer; non-covalently linked (probable alternative/compact dimer conformation). Expressed by the venom gland.

Its subcellular location is the secreted. Snake venom phospholipase A2 (PLA2) that lacks enzymatic activity. Shows high myotoxin activities. Also has anticoagulant activity. A model of myotoxic mechanism has been proposed: an apo Lys49-PLA2 is activated by the entrance of a hydrophobic molecule (e.g. fatty acid) at the hydrophobic channel of the protein leading to a reorientation of a monomer. This reorientation causes a transition between 'inactive' to 'active' states, causing alignment of C-terminal and membrane-docking sites (MDoS) side-by-side and putting the membrane-disruption sites (MDiS) in the same plane, exposed to solvent and in a symmetric position for both monomers. The MDoS region stabilizes the toxin on membrane by the interaction of charged residues with phospholipid head groups. Subsequently, the MDiS region destabilizes the membrane with penetration of hydrophobic residues. This insertion causes a disorganization of the membrane, allowing an uncontrolled influx of ions (i.e. calcium and sodium), and eventually triggering irreversible intracellular alterations and cell death. The polypeptide is Basic phospholipase A2 homolog piratoxin-3 (Bothrops pirajai (Piraja's lancehead)).